The following is a 154-amino-acid chain: 6,7-dimethyl-8-ribityllumazine synthase (154 aa).

5-amino-6-(D-ribitylamino)uracil is bound by residues Phe-26, 60–62 (ALE), and 84–86 (CII). (2S)-2-hydroxy-3-oxobutyl phosphate is bound at residue 89-90 (ET). His-92 serves as the catalytic Proton donor. Asn-117 lines the 5-amino-6-(D-ribitylamino)uracil pocket. Arg-131 is a binding site for (2S)-2-hydroxy-3-oxobutyl phosphate.

This sequence belongs to the DMRL synthase family.

It carries out the reaction (2S)-2-hydroxy-3-oxobutyl phosphate + 5-amino-6-(D-ribitylamino)uracil = 6,7-dimethyl-8-(1-D-ribityl)lumazine + phosphate + 2 H2O + H(+). Its pathway is cofactor biosynthesis; riboflavin biosynthesis; riboflavin from 2-hydroxy-3-oxobutyl phosphate and 5-amino-6-(D-ribitylamino)uracil: step 1/2. In terms of biological role, catalyzes the formation of 6,7-dimethyl-8-ribityllumazine by condensation of 5-amino-6-(D-ribitylamino)uracil with 3,4-dihydroxy-2-butanone 4-phosphate. This is the penultimate step in the biosynthesis of riboflavin. The protein is 6,7-dimethyl-8-ribityllumazine synthase of Leptothrix cholodnii (strain ATCC 51168 / LMG 8142 / SP-6) (Leptothrix discophora (strain SP-6)).